A 613-amino-acid polypeptide reads, in one-letter code: DBH-like monooxygenase protein 1 (613 aa).

The first 19 residues, 1–19, serve as a signal peptide directing secretion; sequence MCCWPLLLLWGLLPGTAAG. Residues 20–592 are Lumenal-facing; it reads GSGRTYPHRT…TSSSSSLHRD (573 aa). The region spanning 35-148 is the DOMON domain; sequence GKYWLGWSQR…STVRVIWAYH (114 aa). Asn114 carries an N-linked (GlcNAc...) asparagine glycan. The active site involves Tyr203. Disulfide bonds link Cys205–Cys257 and Cys242–Cys269. Residues His235 and His236 each contribute to the Cu cation site. Residue Asn247 is glycosylated (N-linked (GlcNAc...) asparagine). Cu cation contacts are provided by His307, His389, His391, and Met464. Intrachain disulfides connect Cys364-Cys480, Cys368-Cys550, and Cys443-Cys465. His389 is a catalytic residue. N-linked (GlcNAc...) asparagine glycosylation is found at Asn476 and Asn517. A helical membrane pass occupies residues 593–613; sequence FSINLLVCLLLLSCTLSTKSL.

The protein belongs to the copper type II ascorbate-dependent monooxygenase family. The cofactor is Cu(2+). Post-translationally, N-glycosylated. Highly expressed in lung, kidney, brain and spinal cord.

The protein resides in the endoplasmic reticulum membrane. This chain is DBH-like monooxygenase protein 1 (MOXD1), found in Homo sapiens (Human).